Here is a 325-residue protein sequence, read N- to C-terminus: UPF0164 protein TP_0856 (325 aa).

The first 28 residues, 1–28 (MVHYKSVFYKSAALVCGFVLAGASVAIA), serve as a signal peptide directing secretion.

This sequence belongs to the UPF0164 family.

The polypeptide is UPF0164 protein TP_0856 (Treponema pallidum (strain Nichols)).